The sequence spans 184 residues: UPF0397 protein SAS2570 (184 aa).

5 consecutive transmembrane segments (helical) span residues 11–31 (VVAI…VVIP), 44–64 (AFLA…TGLV), 77–97 (AWWS…WIGL), 111–131 (MIYF…LIAP), and 148–168 (QGVI…TILL).

Belongs to the UPF0397 family.

The protein localises to the cell membrane. The polypeptide is UPF0397 protein SAS2570 (Staphylococcus aureus (strain MSSA476)).